The primary structure comprises 200 residues: 3-isopropylmalate dehydratase small subunit (200 aa).

The protein belongs to the LeuD family. LeuD type 1 subfamily. As to quaternary structure, heterodimer of LeuC and LeuD.

It carries out the reaction (2R,3S)-3-isopropylmalate = (2S)-2-isopropylmalate. It participates in amino-acid biosynthesis; L-leucine biosynthesis; L-leucine from 3-methyl-2-oxobutanoate: step 2/4. Functionally, catalyzes the isomerization between 2-isopropylmalate and 3-isopropylmalate, via the formation of 2-isopropylmaleate. The protein is 3-isopropylmalate dehydratase small subunit of Campylobacter jejuni (strain RM1221).